Consider the following 44-residue polypeptide: Opistoporin-2 (44 aa).

Expressed by the venom gland.

Its subcellular location is the secreted. The protein localises to the target cell membrane. At high concentrations, acts as a pore former in cellular membranes and causes the leakage of the cells. At submicromolar concentrations, degranulates granulocytes and has a weak hemolytic activity against human erythrocytes. Also strongly inhibits the production of superoxide anions. Has a strong antibacterial activity against Gram-negative bacteria but is less active against Gram-positive bacteria. Also has antifungal activity. This Opistophthalmus carinatus (African yellow leg scorpion) protein is Opistoporin-2.